The sequence spans 139 residues: Large ribosomal subunit protein uL13c (139 aa).

It belongs to the universal ribosomal protein uL13 family. In terms of assembly, part of the 50S ribosomal subunit.

The protein localises to the plastid. Its subcellular location is the chloroplast. In Trieres chinensis (Marine centric diatom), this protein is Large ribosomal subunit protein uL13c.